The following is an 881-amino-acid chain: MSNTEKNLPTKYDHMSVEEGLYQWWLEGKYFEATGDEKKQPYTIVIPPPNVTGKLHLGHAWDTTLQDILTRTKRMQGYDVLWLPGMDHAGIATQAKVEGKLREEGISRYDLGREKFLEKAWEWKEEYASHIRQQWGKVGLGLDYSRERFTLDKGLSDAVNKVFVQLYEKGLIYRGEYIINWDPATRTALSDIEVIHKEVQGAFYHMNYPLTDGSGHIRLATTRPETMLGDTAVAVHPEDDRYKHLIGKTVTLPIVGREIPIIADEYVEKDFGTGVVKITPAHDPNDFEVGNRHDLPRILVMNEDGSMNEKAGKYNGMDRFECRKALVKDLQEAGVLVEIEPHMHSVGHSERSGAVVEPYLSTQWFVKMAPLAEKAIELQQKEEEKVTFVPDRFENTYLRWMENIHDWCISRQLWWGHRIPAWYHKETGEVYVGTEAPADIENWNQDNDVLDTWFSSALWPFSTLGWPNEDAADFKRYYSTDALVTGYDIIFFWVSRMIFQGLEFTGERPFKDVLIHGLVRDEQGRKMSKSLGNGIDPMDVIEKYGADAMRFFLSTGSAPGQDLRFSMEKVESTWNFINKIWNASRFVLMNMDDMKYEEIDLTGEKSVADKWILTRLNETIESVTRNMDKYEFGEAGRSLYNFIWDDFCDWYIEMAKLPLYGEDEAAKKTTRSILAYVLDQTMRLLHPFMPFVTEKIWQHLPHEGESITVAAWPTVREDLQDTEAAAEMHLLVDIIRSVRNIRAEVNTPMSKKVQMQIKAKDEAVLAQLTKNSSYIERFCNPSELTIQTDLQAPEKAMTAIVTGAELFLPLADLINLDEERARLEKELEKFDKEVERVQKKLSNQGFVAKAPAAVIEGERAKEQDYLEKREAVRQRLADLEK.

Positions 49–59 match the 'HIGH' region motif; it reads PNVTGKLHLGH. The short motif at 526–530 is the 'KMSKS' region element; it reads KMSKS. Lys529 lines the ATP pocket. The stretch at 810–881 forms a coiled coil; the sequence is LADLINLDEE…VRQRLADLEK (72 aa).

Belongs to the class-I aminoacyl-tRNA synthetase family. ValS type 1 subfamily. As to quaternary structure, monomer.

Its subcellular location is the cytoplasm. The catalysed reaction is tRNA(Val) + L-valine + ATP = L-valyl-tRNA(Val) + AMP + diphosphate. Catalyzes the attachment of valine to tRNA(Val). As ValRS can inadvertently accommodate and process structurally similar amino acids such as threonine, to avoid such errors, it has a 'posttransfer' editing activity that hydrolyzes mischarged Thr-tRNA(Val) in a tRNA-dependent manner. In Bacillus anthracis, this protein is Valine--tRNA ligase.